Here is a 324-residue protein sequence, read N- to C-terminus: MAFKDLFKFNKGKTTFVFIGGKGGVGKTTISAATALWMARSGKKTLVISTDPAHSLSDSLEREIGHTPTKITENLYAVEIDPEVAMEEYQAKLQEQAAMNPGMGLDMLQDQMDMASMSPGIDEAAAFDQFLRYMTTDEYDIVIFDTAPTGHTLRLLSFPEIMDSWVGKMIKIRRQIGSMAKAFKNILPFMGDEEEEDRALQDMEATKKQINAAREVMSDPERTSFKMVVIPEEMSIYESERAMKALEKYSIHADGVIVNQVLPEESDCEFCNARRKLQQERLKQIREKFSDKVVAEVPLLKKEAKGIETLEKIAEQLYGEPEPE.

Position 21–28 (21–28 (GKGGVGKT)) interacts with ATP.

Belongs to the arsA ATPase family.

The enzyme catalyses arsenite(in) + ATP + H2O = arsenite(out) + ADP + phosphate + H(+). In terms of biological role, anion-transporting ATPase. Catalyzes the extrusion of arsenite. This is Putative arsenical pump-driving ATPase from Methanothermobacter thermautotrophicus (strain ATCC 29096 / DSM 1053 / JCM 10044 / NBRC 100330 / Delta H) (Methanobacterium thermoautotrophicum).